The primary structure comprises 257 residues: Dihydroorotate dehydrogenase B (NAD(+)), electron transfer subunit (257 aa).

An FAD-binding FR-type domain is found at 2-102 (MKQEQMTVVR…LGPLGNGFPL (101 aa)). Residues 53 to 56 (RPLS), 70 to 72 (IYR), and 77 to 78 (GT) contribute to the FAD site. The [2Fe-2S] cluster site is built by C221, C226, C229, and C244.

The protein belongs to the PyrK family. In terms of assembly, heterotetramer of 2 PyrK and 2 PyrD type B subunits. The cofactor is [2Fe-2S] cluster. It depends on FAD as a cofactor.

It functions in the pathway pyrimidine metabolism; UMP biosynthesis via de novo pathway; orotate from (S)-dihydroorotate (NAD(+) route): step 1/1. Responsible for channeling the electrons from the oxidation of dihydroorotate from the FMN redox center in the PyrD type B subunit to the ultimate electron acceptor NAD(+). This chain is Dihydroorotate dehydrogenase B (NAD(+)), electron transfer subunit, found in Geobacillus sp. (strain WCH70).